Consider the following 438-residue polypeptide: tRNA modification GTPase MnmE (438 aa).

Residues R19, E76, and K115 each contribute to the (6S)-5-formyl-5,6,7,8-tetrahydrofolate site. In terms of domain architecture, TrmE-type G spans 211–363; that stretch reads GYKVAIIGRP…LSKELESYLN (153 aa). GTP-binding positions include 221 to 226, 240 to 246, and 265 to 268; these read NVGKSS, SETAGTT, and DTAG. 2 residues coordinate Mg(2+): S225 and T246. Residue K438 participates in (6S)-5-formyl-5,6,7,8-tetrahydrofolate binding.

The protein belongs to the TRAFAC class TrmE-Era-EngA-EngB-Septin-like GTPase superfamily. TrmE GTPase family. Homodimer. Heterotetramer of two MnmE and two MnmG subunits. K(+) is required as a cofactor.

The protein localises to the cytoplasm. Exhibits a very high intrinsic GTPase hydrolysis rate. Involved in the addition of a carboxymethylaminomethyl (cmnm) group at the wobble position (U34) of certain tRNAs, forming tRNA-cmnm(5)s(2)U34. The polypeptide is tRNA modification GTPase MnmE (Campylobacter fetus subsp. fetus (strain 82-40)).